A 558-amino-acid polypeptide reads, in one-letter code: MARVEL domain-containing protein 2 (558 aa).

Basic and acidic residues predominate over residues 1–16; that stretch reads MSNDGRSRNRDRRYDE. Disordered stretches follow at residues 1-58 and 115-145; these read MSND…PPFG and CSPP…GTFS. The Cytoplasmic segment spans residues 1 to 194; the sequence is MSNDGRSRNR…YMKSWAGLLR (194 aa). Pro residues predominate over residues 45–58; that stretch reads PLPPPPLPLQPPFG. Phosphoserine is present on residues S116, S120, and S161. Residue T166 is modified to Phosphothreonine. Residues 188–367 enclose the MARVEL domain; that stretch reads SWAGLLRILG…SALVCLKLWR (180 aa). Residues 195–215 form a helical membrane-spanning segment; the sequence is ILGVVELLLGAGVFACVTAYI. The Extracellular segment spans residues 216 to 223; it reads HKDSEWYN. A helical transmembrane segment spans residues 224–244; sequence LFGYSQPYGMGGVGGLGSMYG. Topologically, residues 245 to 254 are cytoplasmic; that stretch reads GYYYTGPKTP. Residues 255–275 form a helical membrane-spanning segment; sequence FVLVVAGLAWITTIIILVLGM. At 276 to 291 the chain is on the extracellular side; that stretch reads SMYYRTILLDSNWWPL. Residues 292 to 312 traverse the membrane as a helical segment; it reads TEFGINVALFILYMAAAIVYV. Topologically, residues 313-319 are cytoplasmic; the sequence is NDTNRGG. The chain crosses the membrane as a helical span at residues 320 to 337; sequence LCYYPLFNTPVNAVFCRV. The Extracellular portion of the chain corresponds to 338–341; sequence EGGQ. A helical transmembrane segment spans residues 342 to 362; the sequence is IAAMIFLFVTMIVYLISALVC. Over 363 to 558 the chain is Cytoplasmic; the sequence is LKLWRHEAAR…VMNWDVQGYS (196 aa). The residue at position 387 (S387) is a Phosphoserine. K412 participates in a covalent cross-link: Glycyl lysine isopeptide (Lys-Gly) (interchain with G-Cter in ubiquitin). Residues 439–548 adopt a coiled-coil conformation; that stretch reads MPDYVAKYPV…IKQRIQEYDK (110 aa). The 112-residue stretch at 440–551 folds into the OCEL domain; it reads PDYVAKYPVI…RIQEYDKVMN (112 aa).

Belongs to the ELL/occludin family. Interacts with TJP1. Interacts with the ubiquitin ligase ITCH. Interacts (via C-terminal cytoplasmic domain) with LSR (via the cytoplasmic domain), ILDR1 and ILDR2; the interaction is required to recruit MARVELD2 to tricellular contacts. Ubiquitinated by ITCH; but this ubiquitination does not lead to proteasomal degradation. Polyubiquitinated at Lys-412 via 'Lys-63'-linked ubiquitin chains; deubiquitinated by USP53. Post-translationally, phosphorylated.

The protein localises to the cell membrane. It is found in the cell junction. The protein resides in the tight junction. Functionally, plays a role in the formation of tricellular tight junctions and of epithelial barriers. Required for normal hearing via its role in the separation of the endolymphatic and perilymphatic spaces of the organ of Corti in the inner ear, and for normal survival of hair cells in the organ of Corti. The protein is MARVEL domain-containing protein 2 of Homo sapiens (Human).